Reading from the N-terminus, the 101-residue chain is NAD(P)H-quinone oxidoreductase subunit 4L, chloroplastic (101 aa).

3 helical membrane-spanning segments follow: residues Y2–L22, M32–I52, and V61–V81.

It belongs to the complex I subunit 4L family. As to quaternary structure, NDH is composed of at least 16 different subunits, 5 of which are encoded in the nucleus.

It localises to the plastid. The protein localises to the chloroplast thylakoid membrane. It carries out the reaction a plastoquinone + NADH + (n+1) H(+)(in) = a plastoquinol + NAD(+) + n H(+)(out). The enzyme catalyses a plastoquinone + NADPH + (n+1) H(+)(in) = a plastoquinol + NADP(+) + n H(+)(out). Its function is as follows. NDH shuttles electrons from NAD(P)H:plastoquinone, via FMN and iron-sulfur (Fe-S) centers, to quinones in the photosynthetic chain and possibly in a chloroplast respiratory chain. The immediate electron acceptor for the enzyme in this species is believed to be plastoquinone. Couples the redox reaction to proton translocation, and thus conserves the redox energy in a proton gradient. The polypeptide is NAD(P)H-quinone oxidoreductase subunit 4L, chloroplastic (Mesostigma viride (Green alga)).